The sequence spans 343 residues: Cytoplasmic tRNA 2-thiolation protein 1 (343 aa).

This sequence belongs to the TtcA family. CTU1/NCS6/ATPBD3 subfamily.

The protein localises to the cytoplasm. Its pathway is tRNA modification; 5-methoxycarbonylmethyl-2-thiouridine-tRNA biosynthesis. Plays a central role in 2-thiolation of mcm(5)S(2)U at tRNA wobble positions of tRNA(Lys), tRNA(Glu) and tRNA(Gln). Directly binds tRNAs and probably acts by catalyzing adenylation of tRNAs, an intermediate required for 2-thiolation. It is unclear whether it acts as a sulfurtransferase that transfers sulfur from thiocarboxylated URM1 onto the uridine of tRNAs at wobble position. The protein is Cytoplasmic tRNA 2-thiolation protein 1 of Drosophila pseudoobscura pseudoobscura (Fruit fly).